The sequence spans 175 residues: Protein SELF-PRUNING (175 aa).

Belongs to the phosphatidylethanolamine-binding protein family.

It localises to the cytoplasm. Its function is as follows. Not known. In plants homozygous for the recessive allele of the SP gene, sympodial segments develop progressively fewer nodes until the shoot is terminated by two consecutive. inflorescences. This is Protein SELF-PRUNING (SP) from Solanum lycopersicum (Tomato).